The primary structure comprises 596 residues: Putative ankyrin repeat protein FPV024 (596 aa).

ANK repeat units lie at residues lysine 5–asparagine 34, alanine 37–lysine 66, lysine 68–lysine 96, leucine 99–threonine 128, phenylalanine 130–isoleucine 158, histidine 162–isoleucine 191, tyrosine 195–glutamate 225, leucine 229–isoleucine 258, cysteine 262–isoleucine 291, threonine 295–leucine 324, serine 326–isoleucine 355, glutamate 359–methionine 389, and asparagine 394–serine 423.

This is Putative ankyrin repeat protein FPV024 from Fowlpox virus (strain NVSL) (FPV).